Reading from the N-terminus, the 267-residue chain is MKQNRIASLVEQDKKLLVAYYMPEYPVAGATLPVLEALQENGADIIELGIPFSDPVGDGPVIQEAAQRAIRNGVTVKNLLETVHNARRGAGCKAITVPIILMGYCNPLIAYGGDCFLNDAVEAGVDGLLLPDLPPEEAEDFLERAKSFGLTVVFLISPVTPPDRIEMIDSLSTDFSYCLAVNATTGTAKLAGEDADAAIEEYLKRVRQHTRKKFVVGFGIRDKARVMQMWKLADGAVVGTALLQRLAAAHTPGETARLAGEFWQALR.

Catalysis depends on proton acceptor residues E47 and D58.

It belongs to the TrpA family. Tetramer of two alpha and two beta chains.

It carries out the reaction (1S,2R)-1-C-(indol-3-yl)glycerol 3-phosphate + L-serine = D-glyceraldehyde 3-phosphate + L-tryptophan + H2O. The protein operates within amino-acid biosynthesis; L-tryptophan biosynthesis; L-tryptophan from chorismate: step 5/5. In terms of biological role, the alpha subunit is responsible for the aldol cleavage of indoleglycerol phosphate to indole and glyceraldehyde 3-phosphate. This is Tryptophan synthase alpha chain from Chlorobium limicola (strain DSM 245 / NBRC 103803 / 6330).